An 81-amino-acid polypeptide reads, in one-letter code: Protein Vpu (81 aa).

Residues 1 to 7 (MQSLEIV) are Extracellular-facing. Residues 8-28 (AIVELVVAAIIAIVVWTIVFI) form a helical membrane-spanning segment. The Cytoplasmic portion of the chain corresponds to 29-81 (EYRKILRQRKIDRLIDRIREREEDNGNESEGDQEELSALVEMGHHAPWNVDDL). Residues 50–81 (EEDNGNESEGDQEELSALVEMGHHAPWNVDDL) form a disordered region. The span at 53–63 (NGNESEGDQEE) shows a compositional bias: acidic residues. Position 57 is a phosphoserine; by host CK2 (Ser57).

This sequence belongs to the HIV-1 VPU protein family. As to quaternary structure, homopentamer. Interacts with host CD4 and BRTC; these interactions induce proteasomal degradation of CD4. Interacts with host BST2; this interaction leads to the degradation of host BST2. Interacts with host FBXW11. Interacts with host AP1M1; this interaction plays a role in the mistrafficking and subsequent degradation of host BST2. Interacts with host RANBP2; this interaction allows Vpu to down-regulate host BLM sumoylation. Phosphorylated by host CK2. This phosphorylation is necessary for interaction with human BTRC and degradation of CD4.

It localises to the host membrane. With respect to regulation, ion channel activity is inhibited by hexamethylene amiloride in vitro. In terms of biological role, enhances virion budding by targeting host CD4 and Tetherin/BST2 to proteasome degradation. Degradation of CD4 prevents any unwanted premature interactions between viral Env and its host receptor CD4 in the endoplasmic reticulum. Degradation of antiretroviral protein Tetherin/BST2 is important for virion budding, as BST2 tethers new viral particles to the host cell membrane. Mechanistically, Vpu bridges either CD4 or BST2 to BTRC, a substrate recognition subunit of the Skp1/Cullin/F-box protein E3 ubiquitin ligase, induces their ubiquitination and subsequent proteasomal degradation. The alteration of the E3 ligase specificity by Vpu seems to promote the degradation of host IKBKB, leading to NF-kappa-B down-regulation and subsequent apoptosis. Acts as a viroporin that forms an oligomeric ion channel in membranes. Modulates the host DNA repair mechanisms to promote degradation of nuclear viral cDNA in cells that are already productively infected in order to suppress immune sensing and proviral hyper-integration (superinfection). Manipulates PML-NBs and modulates SUMOylation of host BLM protein thereby enhancing its DNA-end processing activity toward viral unintegrated linear DNA. Also inhibits RAD52-mediated homologous repair of viral cDNA, preventing the generation of dead-end circular forms of single copies of the long terminal repeat and permitting sustained nucleolytic attack. This Homo sapiens (Human) protein is Protein Vpu.